A 221-amino-acid polypeptide reads, in one-letter code: ATP phosphoribosyltransferase (221 aa).

This sequence belongs to the ATP phosphoribosyltransferase family. Short subfamily. As to quaternary structure, heteromultimer composed of HisG and HisZ subunits.

Its subcellular location is the cytoplasm. The catalysed reaction is 1-(5-phospho-beta-D-ribosyl)-ATP + diphosphate = 5-phospho-alpha-D-ribose 1-diphosphate + ATP. The protein operates within amino-acid biosynthesis; L-histidine biosynthesis; L-histidine from 5-phospho-alpha-D-ribose 1-diphosphate: step 1/9. Catalyzes the condensation of ATP and 5-phosphoribose 1-diphosphate to form N'-(5'-phosphoribosyl)-ATP (PR-ATP). Has a crucial role in the pathway because the rate of histidine biosynthesis seems to be controlled primarily by regulation of HisG enzymatic activity. The protein is ATP phosphoribosyltransferase of Neisseria gonorrhoeae (strain ATCC 700825 / FA 1090).